We begin with the raw amino-acid sequence, 274 residues long: uncharacterized protein (274 aa).

The C2 NT-type domain maps to 3–141 (IFIPKARRPT…TIRIGISLKQ (139 aa)).

This sequence to yeast YBL086c.

This is an uncharacterized protein from Schizosaccharomyces pombe (strain 972 / ATCC 24843) (Fission yeast).